The primary structure comprises 86 residues: Colicin-E2 immunity protein (86 aa).

This sequence belongs to the colicins ColE2/ColE8/ColE9 and pyocins S1/S2 family.

In terms of biological role, this protein is able to protect a cell, which harbors the plasmid ColE2 encoding colicin E2, against colicin E2. The chain is Colicin-E2 immunity protein (imm) from Escherichia coli.